A 189-amino-acid polypeptide reads, in one-letter code: Apolipoprotein D (189 aa).

An N-terminal signal peptide occupies residues 1–20; sequence MATMLLLLATLAGLFTTTEG. Residue Gln21 is modified to Pyrrolidone carboxylic acid. 2 cysteine pairs are disulfide-bonded: Cys28/Cys134 and Cys61/Cys185. N-linked (GlcNAc...) asparagine glycosylation is found at Asn65 and Asn98.

Belongs to the calycin superfamily. Lipocalin family. In terms of assembly, homodimer. In terms of tissue distribution, expressed in liver, kidney, bladder, adrenal, cerebrum, duodenum, testis, lung, spleen, pancreas, heart and skin.

The protein resides in the secreted. Its function is as follows. APOD occurs in the macromolecular complex with lecithin-transport and binding of bilin. Appears to be able to transport a variety of ligands in a number of different contexts. The polypeptide is Apolipoprotein D (Apod) (Rattus norvegicus (Rat)).